A 512-amino-acid chain; its full sequence is Inositol-3-phosphate synthase (512 aa).

The NAD(+) site is built by G72, G73, N74, N75, D145, I182, Q192, R195, T232, G233, N234, T235, G283, S284, D308, S311, N342, N343, D344, K357, G395, D396, D424, and S425.

It belongs to the myo-inositol 1-phosphate synthase family. Requires NAD(+) as cofactor.

It localises to the cytoplasm. It is found in the cytosol. The protein localises to the nucleus. The catalysed reaction is D-glucose 6-phosphate = 1D-myo-inositol 3-phosphate. The protein operates within polyol metabolism; myo-inositol biosynthesis; myo-inositol from D-glucose 6-phosphate: step 1/2. In terms of biological role, key enzyme in myo-inositol biosynthesis pathway that catalyzes the conversion of glucose 6-phosphate to 1-myo-inositol 1-phosphate in a NAD-dependent manner. The polypeptide is Inositol-3-phosphate synthase (Mesembryanthemum crystallinum (Common ice plant)).